Consider the following 211-residue polypeptide: Molybdenum cofactor guanylyltransferase (211 aa).

GTP is bound by residues L12–G14, K25, N53, D71, and D101. Position 101 (D101) interacts with Mg(2+).

It belongs to the MobA family. As to quaternary structure, monomer. Mg(2+) serves as cofactor.

The protein resides in the cytoplasm. It catalyses the reaction Mo-molybdopterin + GTP + H(+) = Mo-molybdopterin guanine dinucleotide + diphosphate. Functionally, transfers a GMP moiety from GTP to Mo-molybdopterin (Mo-MPT) cofactor (Moco or molybdenum cofactor) to form Mo-molybdopterin guanine dinucleotide (Mo-MGD) cofactor. The polypeptide is Molybdenum cofactor guanylyltransferase (Acidovorax sp. (strain JS42)).